A 102-amino-acid chain; its full sequence is MSEEKPLKVSYSKQFVRDLTDLAKRSPNVLIGSKYITAIHCLLNRLPLPENYQDHALVGEWKGYRDCHIQGDLVLIYQYVIQDEFDELKFSRLNIHSQTALK.

The protein belongs to the RelE toxin family. YafQ subfamily.

In terms of biological role, toxic component of a type II toxin-antitoxin (TA) system. Its cognate antitoxin is RelB. In Haemophilus influenzae (strain ATCC 51907 / DSM 11121 / KW20 / Rd), this protein is Putative toxin YafQ.